We begin with the raw amino-acid sequence, 329 residues long: 4-diphosphocytidyl-2-C-methyl-D-erythritol kinase (329 aa).

Residue Lys14 is part of the active site. 117-127 (PSGAGMGGASS) lines the ATP pocket. The active site involves Asp166.

The protein belongs to the GHMP kinase family. IspE subfamily.

The enzyme catalyses 4-CDP-2-C-methyl-D-erythritol + ATP = 4-CDP-2-C-methyl-D-erythritol 2-phosphate + ADP + H(+). It participates in isoprenoid biosynthesis; isopentenyl diphosphate biosynthesis via DXP pathway; isopentenyl diphosphate from 1-deoxy-D-xylulose 5-phosphate: step 3/6. Functionally, catalyzes the phosphorylation of the position 2 hydroxy group of 4-diphosphocytidyl-2C-methyl-D-erythritol. The sequence is that of 4-diphosphocytidyl-2-C-methyl-D-erythritol kinase from Rhodopirellula baltica (strain DSM 10527 / NCIMB 13988 / SH1).